The following is a 267-amino-acid chain: 4-hydroxy-tetrahydrodipicolinate reductase (267 aa).

10 to 15 (GANGRM) contacts NAD(+). Arg-37 serves as a coordination point for NADP(+). NAD(+) contacts are provided by residues 98 to 100 (GTT) and 122 to 125 (ARNY). His-155 acts as the Proton donor/acceptor in catalysis. His-156 provides a ligand contact to (S)-2,3,4,5-tetrahydrodipicolinate. The active-site Proton donor is Lys-159. Position 165 to 166 (165 to 166 (GT)) interacts with (S)-2,3,4,5-tetrahydrodipicolinate.

This sequence belongs to the DapB family.

It is found in the cytoplasm. The catalysed reaction is (S)-2,3,4,5-tetrahydrodipicolinate + NAD(+) + H2O = (2S,4S)-4-hydroxy-2,3,4,5-tetrahydrodipicolinate + NADH + H(+). It catalyses the reaction (S)-2,3,4,5-tetrahydrodipicolinate + NADP(+) + H2O = (2S,4S)-4-hydroxy-2,3,4,5-tetrahydrodipicolinate + NADPH + H(+). Its pathway is amino-acid biosynthesis; L-lysine biosynthesis via DAP pathway; (S)-tetrahydrodipicolinate from L-aspartate: step 4/4. Functionally, catalyzes the conversion of 4-hydroxy-tetrahydrodipicolinate (HTPA) to tetrahydrodipicolinate. The protein is 4-hydroxy-tetrahydrodipicolinate reductase of Pseudoalteromonas translucida (strain TAC 125).